We begin with the raw amino-acid sequence, 288 residues long: Homoserine kinase (288 aa).

78 to 88 serves as a coordination point for ATP; that stretch reads PLARGLGSSSS.

This sequence belongs to the GHMP kinase family. Homoserine kinase subfamily.

Its subcellular location is the cytoplasm. The catalysed reaction is L-homoserine + ATP = O-phospho-L-homoserine + ADP + H(+). Its pathway is amino-acid biosynthesis; L-threonine biosynthesis; L-threonine from L-aspartate: step 4/5. Catalyzes the ATP-dependent phosphorylation of L-homoserine to L-homoserine phosphate. The protein is Homoserine kinase of Streptococcus agalactiae serotype V (strain ATCC BAA-611 / 2603 V/R).